We begin with the raw amino-acid sequence, 202 residues long: Oxopyrrolidines biosynthesis cluster protein O (202 aa).

Part of the gene cluster that mediates the biosynthesis of oxopyrrolidines, polyketide-amino acid hybrid compounds with feature structures of tetramic acid. Does not seem to play a role in oxopyrrolidines A and B biosynthesis. This is Oxopyrrolidines biosynthesis cluster protein O from Penicillium oxalicum (strain 114-2 / CGMCC 5302) (Penicillium decumbens).